The following is a 158-amino-acid chain: Small ribosomal subunit protein bS6 (158 aa).

The segment at E98 to N158 is disordered. Composition is skewed to basic and acidic residues over residues R106–F117 and D127–R150.

It belongs to the bacterial ribosomal protein bS6 family.

In terms of biological role, binds together with bS18 to 16S ribosomal RNA. The polypeptide is Small ribosomal subunit protein bS6 (Acidiphilium cryptum (strain JF-5)).